Here is a 509-residue protein sequence, read N- to C-terminus: ATP synthase subunit beta (509 aa).

167-174 is an ATP binding site; sequence GGAGVGKT. Residues 476–509 form a disordered region; it reads ESLGAKMEDTSGDGAPAQSDSKSDSKGDDADKDA. Basic and acidic residues predominate over residues 496–509; the sequence is SKSDSKGDDADKDA.

Belongs to the ATPase alpha/beta chains family. F-type ATPases have 2 components, CF(1) - the catalytic core - and CF(0) - the membrane proton channel. CF(1) has five subunits: alpha(3), beta(3), gamma(1), delta(1), epsilon(1). CF(0) has three main subunits: a(1), b(2) and c(9-12). The alpha and beta chains form an alternating ring which encloses part of the gamma chain. CF(1) is attached to CF(0) by a central stalk formed by the gamma and epsilon chains, while a peripheral stalk is formed by the delta and b chains.

It is found in the cell membrane. The catalysed reaction is ATP + H2O + 4 H(+)(in) = ADP + phosphate + 5 H(+)(out). In terms of biological role, produces ATP from ADP in the presence of a proton gradient across the membrane. The catalytic sites are hosted primarily by the beta subunits. In Mycobacterium sp. (strain KMS), this protein is ATP synthase subunit beta.